Consider the following 270-residue polypeptide: Acetyl-coenzyme A carboxylase carboxyl transferase subunit beta (270 aa).

In terms of domain architecture, CoA carboxyltransferase N-terminal spans 16-270; that stretch reads LFAKCPACKH…KLLAFHGGSK (255 aa). Cys20, Cys23, Cys38, and Cys41 together coordinate Zn(2+). The C4-type zinc finger occupies 20–41; the sequence is CPACKHMIYQKDLGLEKICPKC.

Belongs to the AccD/PCCB family. In terms of assembly, acetyl-CoA carboxylase is a heterohexamer composed of biotin carboxyl carrier protein (AccB), biotin carboxylase (AccC) and two subunits each of ACCase subunit alpha (AccA) and ACCase subunit beta (AccD). Requires Zn(2+) as cofactor.

It is found in the cytoplasm. It catalyses the reaction N(6)-carboxybiotinyl-L-lysyl-[protein] + acetyl-CoA = N(6)-biotinyl-L-lysyl-[protein] + malonyl-CoA. It functions in the pathway lipid metabolism; malonyl-CoA biosynthesis; malonyl-CoA from acetyl-CoA: step 1/1. In terms of biological role, component of the acetyl coenzyme A carboxylase (ACC) complex. Biotin carboxylase (BC) catalyzes the carboxylation of biotin on its carrier protein (BCCP) and then the CO(2) group is transferred by the transcarboxylase to acetyl-CoA to form malonyl-CoA. In Streptococcus mutans serotype c (strain NN2025), this protein is Acetyl-coenzyme A carboxylase carboxyl transferase subunit beta.